A 254-amino-acid chain; its full sequence is 3-deoxy-manno-octulosonate cytidylyltransferase (254 aa).

The protein belongs to the KdsB family.

It localises to the cytoplasm. The enzyme catalyses 3-deoxy-alpha-D-manno-oct-2-ulosonate + CTP = CMP-3-deoxy-beta-D-manno-octulosonate + diphosphate. It functions in the pathway nucleotide-sugar biosynthesis; CMP-3-deoxy-D-manno-octulosonate biosynthesis; CMP-3-deoxy-D-manno-octulosonate from 3-deoxy-D-manno-octulosonate and CTP: step 1/1. The protein operates within bacterial outer membrane biogenesis; lipopolysaccharide biosynthesis. Its function is as follows. Activates KDO (a required 8-carbon sugar) for incorporation into bacterial lipopolysaccharide in Gram-negative bacteria. This is 3-deoxy-manno-octulosonate cytidylyltransferase from Chlamydia caviae (strain ATCC VR-813 / DSM 19441 / 03DC25 / GPIC) (Chlamydophila caviae).